Here is a 210-residue protein sequence, read N- to C-terminus: Protein SYM1 (210 aa).

A run of 4 helical transmembrane segments spans residues I22–F39, A68–Y84, L112–L129, and L173–Y189.

The protein belongs to the peroxisomal membrane protein PXMP2/4 family.

Its subcellular location is the mitochondrion inner membrane. Its function is as follows. May be involved in cellular response to stress. Required to maintain mitochondrial DNA (mtDNA) integrity and stability. In Candida glabrata (strain ATCC 2001 / BCRC 20586 / JCM 3761 / NBRC 0622 / NRRL Y-65 / CBS 138) (Yeast), this protein is Protein SYM1 (SYM1).